We begin with the raw amino-acid sequence, 316 residues long: 33 kDa chaperonin (316 aa).

2 disulfides stabilise this stretch: C239–C241 and C272–C275.

The protein belongs to the HSP33 family. Under oxidizing conditions two disulfide bonds are formed involving the reactive cysteines. Under reducing conditions zinc is bound to the reactive cysteines and the protein is inactive.

The protein resides in the cytoplasm. In terms of biological role, redox regulated molecular chaperone. Protects both thermally unfolding and oxidatively damaged proteins from irreversible aggregation. Plays an important role in the bacterial defense system toward oxidative stress. This Clostridium perfringens (strain SM101 / Type A) protein is 33 kDa chaperonin.